The following is a 451-amino-acid chain: uncharacterized protein (451 aa).

The TRAM domain occupies 1–59 (MLHKNDIIETEISDISHEGMGIAKVDGFVFFVENALPGEIIKMRVLKLRKRIGYGKVEE). S-adenosyl-L-methionine contacts are provided by Gln283, Tyr312, Glu333, and Asp381. The active-site Nucleophile is Cys408.

The protein belongs to the class I-like SAM-binding methyltransferase superfamily. RNA M5U methyltransferase family.

This is an uncharacterized protein from Streptococcus agalactiae serotype V (strain ATCC BAA-611 / 2603 V/R).